A 163-amino-acid polypeptide reads, in one-letter code: Epithelial membrane protein 3 (163 aa).

The chain crosses the membrane as a helical span at residues 4–24 (LLLVVSALHILILILLFVATL). N-linked (GlcNAc...) asparagine glycosylation is found at Asn47 and Asn56. 3 helical membrane-spanning segments follow: residues 66–86 (VQVLMVLSLILCCLSFILFMF), 100–120 (TGLCQLCTSVAVFTGALIYAI), and 139–159 (FALAWVAFPLALVSGIIYIHL).

Belongs to the PMP-22/EMP/MP20 family.

The protein localises to the membrane. Functionally, probably involved in cell proliferation and cell-cell interactions. In Homo sapiens (Human), this protein is Epithelial membrane protein 3 (EMP3).